The primary structure comprises 873 residues: Leucine--tRNA ligase (873 aa).

The 'HIGH' region signature appears at 48-58 (PYPSGKLHMGH). The 'KMSKS' region signature appears at 636-640 (KMSKS). Lysine 639 lines the ATP pocket.

This sequence belongs to the class-I aminoacyl-tRNA synthetase family.

The protein localises to the cytoplasm. It catalyses the reaction tRNA(Leu) + L-leucine + ATP = L-leucyl-tRNA(Leu) + AMP + diphosphate. The sequence is that of Leucine--tRNA ligase from Cupriavidus metallidurans (strain ATCC 43123 / DSM 2839 / NBRC 102507 / CH34) (Ralstonia metallidurans).